The primary structure comprises 254 residues: 3-deoxy-manno-octulosonate cytidylyltransferase (254 aa).

Belongs to the KdsB family.

Its subcellular location is the cytoplasm. It carries out the reaction 3-deoxy-alpha-D-manno-oct-2-ulosonate + CTP = CMP-3-deoxy-beta-D-manno-octulosonate + diphosphate. Its pathway is nucleotide-sugar biosynthesis; CMP-3-deoxy-D-manno-octulosonate biosynthesis; CMP-3-deoxy-D-manno-octulosonate from 3-deoxy-D-manno-octulosonate and CTP: step 1/1. It participates in bacterial outer membrane biogenesis; lipopolysaccharide biosynthesis. Its function is as follows. Activates KDO (a required 8-carbon sugar) for incorporation into bacterial lipopolysaccharide in Gram-negative bacteria. The chain is 3-deoxy-manno-octulosonate cytidylyltransferase from Chlamydia pneumoniae (Chlamydophila pneumoniae).